The following is a 557-amino-acid chain: CTP synthase (557 aa).

Residues 1-270 (MTKYVFVTGG…DAIICEELKL (270 aa)) are amidoligase domain. Ser13 provides a ligand contact to CTP. Ser13 contributes to the UTP binding site. Residues 14-19 (SLGKGI) and Asp71 contribute to the ATP site. Positions 71 and 144 each coordinate Mg(2+). CTP-binding positions include 151–153 (DIE), 191–196 (KTKPTQ), and Lys227. UTP contacts are provided by residues 191-196 (KTKPTQ) and Lys227. The Glutamine amidotransferase type-1 domain maps to 295–547 (TIGMVGKYVD…VEAALAHHEA (253 aa)). Gly356 is a binding site for L-glutamine. The active-site Nucleophile; for glutamine hydrolysis is Cys383. L-glutamine contacts are provided by residues 384 to 387 (LGMQ), Glu407, and Arg473. Active-site residues include His520 and Glu522.

It belongs to the CTP synthase family. In terms of assembly, homotetramer.

It catalyses the reaction UTP + L-glutamine + ATP + H2O = CTP + L-glutamate + ADP + phosphate + 2 H(+). The catalysed reaction is L-glutamine + H2O = L-glutamate + NH4(+). The enzyme catalyses UTP + NH4(+) + ATP = CTP + ADP + phosphate + 2 H(+). Its pathway is pyrimidine metabolism; CTP biosynthesis via de novo pathway; CTP from UDP: step 2/2. Allosterically activated by GTP, when glutamine is the substrate; GTP has no effect on the reaction when ammonia is the substrate. The allosteric effector GTP functions by stabilizing the protein conformation that binds the tetrahedral intermediate(s) formed during glutamine hydrolysis. Inhibited by the product CTP, via allosteric rather than competitive inhibition. In terms of biological role, catalyzes the ATP-dependent amination of UTP to CTP with either L-glutamine or ammonia as the source of nitrogen. Regulates intracellular CTP levels through interactions with the four ribonucleotide triphosphates. The protein is CTP synthase of Paraburkholderia phytofirmans (strain DSM 17436 / LMG 22146 / PsJN) (Burkholderia phytofirmans).